A 324-amino-acid polypeptide reads, in one-letter code: ATP-dependent 6-phosphofructokinase (324 aa).

Gly-15 serves as a coordination point for ATP. An ADP-binding site is contributed by 25–29 (RGVVR). Residues 76–77 (RF) and 106–109 (GDGS) each bind ATP. Asp-107 serves as a coordination point for Mg(2+). Substrate is bound at residue 130–132 (TID). The active-site Proton acceptor is Asp-132. Arg-159 is an ADP binding site. Substrate-binding positions include Arg-167 and 174–176 (MGR). ADP contacts are provided by residues 190-192 (GCE), Lys-216, and 218-220 (KRH). Residues Glu-227, Arg-248, and 254 to 257 (HIQR) contribute to the substrate site.

This sequence belongs to the phosphofructokinase type A (PFKA) family. ATP-dependent PFK group I subfamily. Prokaryotic clade 'B1' sub-subfamily. As to quaternary structure, homotetramer. It depends on Mg(2+) as a cofactor.

Its subcellular location is the cytoplasm. It catalyses the reaction beta-D-fructose 6-phosphate + ATP = beta-D-fructose 1,6-bisphosphate + ADP + H(+). The protein operates within carbohydrate degradation; glycolysis; D-glyceraldehyde 3-phosphate and glycerone phosphate from D-glucose: step 3/4. Allosterically activated by ADP and other diphosphonucleosides, and allosterically inhibited by phosphoenolpyruvate. Catalyzes the phosphorylation of D-fructose 6-phosphate to fructose 1,6-bisphosphate by ATP, the first committing step of glycolysis. In Actinobacillus pleuropneumoniae serotype 5b (strain L20), this protein is ATP-dependent 6-phosphofructokinase.